We begin with the raw amino-acid sequence, 437 residues long: Phosphomethylpyrimidine synthase (437 aa).

Substrate is bound by residues Asn69, Met98, Tyr127, His163, 185-187 (SRG), 226-229 (DACR), and Glu265. His269 provides a ligand contact to Zn(2+). Residue Tyr292 coordinates substrate. His333 contributes to the Zn(2+) binding site. [4Fe-4S] cluster-binding residues include Cys409, Cys412, and Cys416.

It belongs to the ThiC family. Requires [4Fe-4S] cluster as cofactor.

It catalyses the reaction 5-amino-1-(5-phospho-beta-D-ribosyl)imidazole + S-adenosyl-L-methionine = 4-amino-2-methyl-5-(phosphooxymethyl)pyrimidine + CO + 5'-deoxyadenosine + formate + L-methionine + 3 H(+). Its pathway is cofactor biosynthesis; thiamine diphosphate biosynthesis. In terms of biological role, catalyzes the synthesis of the hydroxymethylpyrimidine phosphate (HMP-P) moiety of thiamine from aminoimidazole ribotide (AIR) in a radical S-adenosyl-L-methionine (SAM)-dependent reaction. This chain is Phosphomethylpyrimidine synthase, found in Clostridium novyi (strain NT).